We begin with the raw amino-acid sequence, 202 residues long: Urease accessory protein UreE (202 aa).

Basic and acidic residues predominate over residues 171–188; it reads HHGHSHSHDHDHDHDHQH. The segment at 171 to 202 is disordered; it reads HHGHSHSHDHDHDHDHQHGPGCTHGHRGHDHH.

It belongs to the UreE family.

The protein localises to the cytoplasm. In terms of biological role, involved in urease metallocenter assembly. Binds nickel. Probably functions as a nickel donor during metallocenter assembly. The protein is Urease accessory protein UreE of Burkholderia ambifaria (strain ATCC BAA-244 / DSM 16087 / CCUG 44356 / LMG 19182 / AMMD) (Burkholderia cepacia (strain AMMD)).